The chain runs to 136 residues: Nucleoside diphosphate kinase (136 aa).

Lys-10, Phe-58, Arg-86, Thr-92, Arg-104, and Asn-114 together coordinate ATP. His-117 functions as the Pros-phosphohistidine intermediate in the catalytic mechanism.

The protein belongs to the NDK family. Homotetramer. The cofactor is Mg(2+).

It localises to the cytoplasm. The enzyme catalyses a 2'-deoxyribonucleoside 5'-diphosphate + ATP = a 2'-deoxyribonucleoside 5'-triphosphate + ADP. The catalysed reaction is a ribonucleoside 5'-diphosphate + ATP = a ribonucleoside 5'-triphosphate + ADP. Its function is as follows. Major role in the synthesis of nucleoside triphosphates other than ATP. The ATP gamma phosphate is transferred to the NDP beta phosphate via a ping-pong mechanism, using a phosphorylated active-site intermediate. The polypeptide is Nucleoside diphosphate kinase (Mycobacterium leprae (strain TN)).